A 130-amino-acid polypeptide reads, in one-letter code: Small ribosomal subunit protein uS11 (130 aa).

The interval 108–130 (IEDVTPIPHDGTGRPGGKRGRRV) is disordered.

It belongs to the universal ribosomal protein uS11 family. Part of the 30S ribosomal subunit.

Located on the platform of the 30S subunit. The sequence is that of Small ribosomal subunit protein uS11 from Methanothermobacter thermautotrophicus (strain ATCC 29096 / DSM 1053 / JCM 10044 / NBRC 100330 / Delta H) (Methanobacterium thermoautotrophicum).